The sequence spans 576 residues: Arginine--tRNA ligase (576 aa).

The short motif at 126–136 (ANPTGPMHIGH) is the 'HIGH' region element.

It belongs to the class-I aminoacyl-tRNA synthetase family. As to quaternary structure, monomer.

The protein resides in the cytoplasm. The catalysed reaction is tRNA(Arg) + L-arginine + ATP = L-arginyl-tRNA(Arg) + AMP + diphosphate. The chain is Arginine--tRNA ligase from Rickettsia akari (strain Hartford).